Here is a 336-residue protein sequence, read N- to C-terminus: F420-dependent glucose-6-phosphate dehydrogenase (336 aa).

Asp-39 provides a ligand contact to coenzyme F420-(gamma-Glu)n. His-40 acts as the Proton donor in catalysis. Residues Thr-76 and Thr-107–Gly-108 contribute to the coenzyme F420-(gamma-Glu)n site. Glu-109 (proton acceptor) is an active-site residue. Coenzyme F420-(gamma-Glu)n contacts are provided by residues Asn-112, Gly-177–Gly-178, and Glu-180–Val-181. 4 residues coordinate substrate: Thr-195, Lys-198, Lys-259, and Arg-283.

It belongs to the F420-dependent glucose-6-phosphate dehydrogenase family. In terms of assembly, homodimer.

The catalysed reaction is oxidized coenzyme F420-(gamma-L-Glu)(n) + D-glucose 6-phosphate + H(+) = 6-phospho-D-glucono-1,5-lactone + reduced coenzyme F420-(gamma-L-Glu)(n). Catalyzes the coenzyme F420-dependent oxidation of glucose 6-phosphate (G6P) to 6-phosphogluconolactone. Appears to have a role in resistance to oxidative stress, via its consumption of G6P that serves as a source of reducing power to combat oxidative stress in mycobacteria. The chain is F420-dependent glucose-6-phosphate dehydrogenase from Mycobacterium leprae (strain Br4923).